The following is a 145-amino-acid chain: uncharacterized protein (145 aa).

Helical transmembrane passes span 3–23 (VGIILGILSAMGFLVFLGIGG), 83–103 (YVIDVGYSILFLVTLTLYLVP), and 105–125 (LSLLVWVTFFGATVFMIMLWI).

It is found in the cell membrane. This is an uncharacterized protein from Methanocaldococcus jannaschii (strain ATCC 43067 / DSM 2661 / JAL-1 / JCM 10045 / NBRC 100440) (Methanococcus jannaschii).